The following is a 264-amino-acid chain: MKKMTINDLIKWKQEGRKFATSTAYDASFAQLFESQEMPVLLVGDSLGMVLQGKTDTLPVTVEDIAYHTRSVRAGSPNCLLMADMPFMSYATPEQACENAATLMRAGANMVKIEGGDWLVDTVKMLTERAVPVCAHLGLTPQSVNIFGGYKVQGRDQEKADRMVKDALALQEAGAQIVLLECVPAELAARITQVLDVPVIGIGAGNVTDGQILVMHDMFGISANYMPKFSKNFLAETGDMRKAVAQYMAEVESGAFPDEAHTIA.

Mg(2+) contacts are provided by D45 and D84. 3-methyl-2-oxobutanoate contacts are provided by residues D45 to S46, D84, and K112. Residue E114 coordinates Mg(2+). Catalysis depends on E181, which acts as the Proton acceptor.

The protein belongs to the PanB family. As to quaternary structure, homodecamer; pentamer of dimers. It depends on Mg(2+) as a cofactor.

It is found in the cytoplasm. The catalysed reaction is 3-methyl-2-oxobutanoate + (6R)-5,10-methylene-5,6,7,8-tetrahydrofolate + H2O = 2-dehydropantoate + (6S)-5,6,7,8-tetrahydrofolate. It participates in cofactor biosynthesis; (R)-pantothenate biosynthesis; (R)-pantoate from 3-methyl-2-oxobutanoate: step 1/2. In terms of biological role, catalyzes the reversible reaction in which hydroxymethyl group from 5,10-methylenetetrahydrofolate is transferred onto alpha-ketoisovalerate to form ketopantoate. This is 3-methyl-2-oxobutanoate hydroxymethyltransferase from Vibrio campbellii (strain ATCC BAA-1116).